Here is a 153-residue protein sequence, read N- to C-terminus: Superoxide dismutase [Cu-Zn] (153 aa).

Residues His-45, His-47, and His-62 each contribute to the Cu cation site. Cys-56 and Cys-145 form a disulfide bridge. The Zn(2+) site is built by His-62, His-70, His-79, and Asp-82. Residue His-119 participates in Cu cation binding.

Belongs to the Cu-Zn superoxide dismutase family. Homodimer. It depends on Cu cation as a cofactor. The cofactor is Zn(2+).

It localises to the cytoplasm. The catalysed reaction is 2 superoxide + 2 H(+) = H2O2 + O2. Its function is as follows. Destroys radicals which are normally produced within the cells and which are toxic to biological systems. The chain is Superoxide dismutase [Cu-Zn] from Drosophila yakuba (Fruit fly).